A 161-amino-acid chain; its full sequence is Regulator of ribonuclease activity A (161 aa).

The protein belongs to the RraA family. In terms of assembly, homotrimer. Binds to both RNA-binding sites in the C-terminal region of Rne and to RhlB.

It localises to the cytoplasm. In terms of biological role, globally modulates RNA abundance by binding to RNase E (Rne) and regulating its endonucleolytic activity. Can modulate Rne action in a substrate-dependent manner by altering the composition of the degradosome. Modulates RNA-binding and helicase activities of the degradosome. In Salmonella agona (strain SL483), this protein is Regulator of ribonuclease activity A.